We begin with the raw amino-acid sequence, 347 residues long: F-box protein At2g14500 (347 aa).

The F-box domain maps to Pro6–Ile52.

The sequence is that of F-box protein At2g14500 from Arabidopsis thaliana (Mouse-ear cress).